A 1073-amino-acid chain; its full sequence is PX domain-containing protein LEC1 (1073 aa).

The segment covering 218–228 has biased composition (basic and acidic residues); the sequence is CTESVDNDKSS. The tract at residues 218-240 is disordered; sequence CTESVDNDKSSKSTPTSSPKSHA. Residues 229 to 238 are compositionally biased toward low complexity; sequence KSTPTSSPKS. The PX domain occupies 273-506; the sequence is LFSKLSLGVP…RFFLSGPNLD (234 aa). Residues Ser310 and Ser451 each carry the phosphoserine modification. Residues 431 to 456 are disordered; sequence IKEEDNIDEDEYEEEGEGEESDFDEY. Residues 432-453 show a composition bias toward acidic residues; it reads KEEDNIDEDEYEEEGEGEESDF.

Its subcellular location is the endoplasmic reticulum membrane. The protein resides in the lipid droplet. Functionally, phosphoinositide-binding protein that plays a role in regulation of ergosterol distribution in the cell. Facilitates ergosterol transport between plasma membrane and lipid droplets. This Saccharomyces cerevisiae (strain ATCC 204508 / S288c) (Baker's yeast) protein is PX domain-containing protein LEC1.